A 380-amino-acid polypeptide reads, in one-letter code: Flap endonuclease 1 (380 aa).

Residues 1–104 form an N-domain region; it reads MGIKGLSQLI…GELTKRAEKR (104 aa). Asp34 is a binding site for Mg(2+). DNA contacts are provided by Arg47 and Arg70. 5 residues coordinate Mg(2+): Asp86, Glu158, Glu160, Asp179, and Asp181. The interval 122 to 253 is I-domain; that stretch reads DIDKFNRRLV…KKAVELINKH (132 aa). Glu158 is a DNA binding site. Positions 231 and 233 each coordinate DNA. Mg(2+) is bound at residue Asp233. The interval 336 to 344 is interaction with PCNA; the sequence is TQGRLDSFF. Residues 342–380 form a disordered region; sequence SFFKVLPSTPNPKRKIEDKKTPASKKAKTTGGKPGRKPK. Positions 363–380 are enriched in basic residues; that stretch reads PASKKAKTTGGKPGRKPK.

It belongs to the XPG/RAD2 endonuclease family. FEN1 subfamily. Interacts with PCNA. Three molecules of FEN1 bind to one PCNA trimer with each molecule binding to one PCNA monomer. PCNA stimulates the nuclease activity without altering cleavage specificity. Mg(2+) is required as a cofactor. Post-translationally, phosphorylated. Phosphorylation upon DNA damage induces relocalization to the nuclear plasma.

It localises to the nucleus. It is found in the nucleolus. The protein resides in the nucleoplasm. Its subcellular location is the mitochondrion. Functionally, structure-specific nuclease with 5'-flap endonuclease and 5'-3' exonuclease activities involved in DNA replication and repair. During DNA replication, cleaves the 5'-overhanging flap structure that is generated by displacement synthesis when DNA polymerase encounters the 5'-end of a downstream Okazaki fragment. It enters the flap from the 5'-end and then tracks to cleave the flap base, leaving a nick for ligation. Also involved in the long patch base excision repair (LP-BER) pathway, by cleaving within the apurinic/apyrimidinic (AP) site-terminated flap. Acts as a genome stabilization factor that prevents flaps from equilibrating into structures that lead to duplications and deletions. Also possesses 5'-3' exonuclease activity on nicked or gapped double-stranded DNA, and exhibits RNase H activity. Also involved in replication and repair of rDNA and in repairing mitochondrial DNA. The sequence is that of Flap endonuclease 1 from Aedes aegypti (Yellowfever mosquito).